The sequence spans 726 residues: Catalase-peroxidase (726 aa).

The disordered stretch occupies residues 1–33 (MSTTDDTHNTLSTGKCPFHQGGHDRSAGAGTAS). Residues 105–226 (WHGAGTYRSI…LGATEMGLIY (122 aa)) constitute a cross-link (tryptophyl-tyrosyl-methioninium (Trp-Tyr) (with M-252)). The Proton acceptor role is filled by His106. Positions 226-252 (YVNPEGPDHSGEPLSAAAAIRATFGNM) form a cross-link, tryptophyl-tyrosyl-methioninium (Tyr-Met) (with W-105). His267 is a heme b binding site.

This sequence belongs to the peroxidase family. Peroxidase/catalase subfamily. As to quaternary structure, homodimer or homotetramer. Heme b is required as a cofactor. In terms of processing, formation of the three residue Trp-Tyr-Met cross-link is important for the catalase, but not the peroxidase activity of the enzyme.

It catalyses the reaction H2O2 + AH2 = A + 2 H2O. It carries out the reaction 2 H2O2 = O2 + 2 H2O. Bifunctional enzyme with both catalase and broad-spectrum peroxidase activity. This chain is Catalase-peroxidase, found in Salmonella choleraesuis (strain SC-B67).